The chain runs to 166 residues: Protein-export protein SecB (166 aa).

The protein belongs to the SecB family. Homotetramer, a dimer of dimers. One homotetramer interacts with 1 SecA dimer.

The protein localises to the cytoplasm. In terms of biological role, one of the proteins required for the normal export of preproteins out of the cell cytoplasm. It is a molecular chaperone that binds to a subset of precursor proteins, maintaining them in a translocation-competent state. It also specifically binds to its receptor SecA. This Actinobacillus pleuropneumoniae serotype 7 (strain AP76) protein is Protein-export protein SecB.